Consider the following 132-residue polypeptide: UPF0060 membrane protein SG1469 (132 aa).

3 helical membrane-spanning segments follow: residues 5-25, 32-52, and 60-80; these read VLLYIATAVAAILGCYLPYCY, LLLIPAALSLIAFVGLLVLYP, and AAYGGVYILTAFLWLRFIDGI.

This sequence belongs to the UPF0060 family.

The protein localises to the cell inner membrane. The chain is UPF0060 membrane protein SG1469 from Sodalis glossinidius (strain morsitans).